We begin with the raw amino-acid sequence, 329 residues long: Diaminopimelate epimerase (329 aa).

The substrate site is built by Asn-14 and Asn-73. The active-site Proton donor is the Cys-82. Substrate-binding positions include 83-84 (GN), Asn-170, Asn-206, and 224-225 (ER). Cys-233 serves as the catalytic Proton acceptor. Position 234–235 (234–235 (GT)) interacts with substrate.

It belongs to the diaminopimelate epimerase family. In terms of assembly, homodimer.

It localises to the cytoplasm. It carries out the reaction (2S,6S)-2,6-diaminopimelate = meso-2,6-diaminopimelate. The protein operates within amino-acid biosynthesis; L-lysine biosynthesis via DAP pathway; DL-2,6-diaminopimelate from LL-2,6-diaminopimelate: step 1/1. Functionally, catalyzes the stereoinversion of LL-2,6-diaminopimelate (L,L-DAP) to meso-diaminopimelate (meso-DAP), a precursor of L-lysine and an essential component of the bacterial peptidoglycan. This is Diaminopimelate epimerase from Listeria monocytogenes serovar 1/2a (strain ATCC BAA-679 / EGD-e).